The chain runs to 165 residues: uncharacterized protein (165 aa).

Residues 16–36 (ASISSILNFFFFYIMEYFVAV) form a helical membrane-spanning segment.

This sequence belongs to the asfivirus F165R family.

Its subcellular location is the host membrane. This is an uncharacterized protein from Ornithodoros (relapsing fever ticks).